We begin with the raw amino-acid sequence, 531 residues long: MKDRFKQKYTAGAAVAYMSRKQALKKLQLTLKDFRRLCIIKGIYPHEPAHKKQANKGSTANKVFYYRKDINFLAHEPIINKFRDYKVFLRKLNHLKAKKEEDKLKKLYENKPVYSLDTIVKERFPTFGSALRDMDDALSLCFTFAMLPHTRVLKEGMIDSCRKLTAEFMHYVIESQSLRNTFISIKGIYYQAEVHGEKITWVVPHERGLPHVTDVDFTVLVTFVEFYIAMLGFVNFKLYQDIGLFYPPQIGQVVKTDEMETEEYKEKVYSLAKPLAKRKDVEQAEDDEPLDLLGEDSDALAQKVREAKSIKTMFKGCVFYLNRECPKEALTFIIRNGGGIVGWEGGPTDLKADSKNISHHVVDRPMDKLEVNRLYVQPQWVFDCLNARRKLPTERYMPGVALPPHFSPFTSEKAGDYIPFERLEELRSMGKDVSDLEAAIPKTMDELPMRRKEVKPEKPKGIHIAVGQMHKKSKEKFHETVEKGQELKMRELMISKKHQRVYHSMKTTFKRNRNDALKLKKKAKLAKATEA.

Positions 309-398 (SIKTMFKGCV…RKLPTERYMP (90 aa)) constitute a BRCT domain.

Belongs to the pescadillo family.

Its subcellular location is the nucleus. The protein resides in the nucleolus. It is found in the nucleoplasm. In terms of biological role, required for maturation of ribosomal RNAs and formation of the large ribosomal subunit. This chain is Pescadillo homolog, found in Caenorhabditis elegans.